The following is a 344-amino-acid chain: tRNA N6-adenosine threonylcarbamoyltransferase (344 aa).

Residues H111 and H115 each coordinate Fe cation. Residues 134–138, D167, G180, D184, and N277 each bind substrate; that span reads LVSGG. D305 is a Fe cation binding site.

Belongs to the KAE1 / TsaD family. Fe(2+) serves as cofactor.

It localises to the cytoplasm. It catalyses the reaction L-threonylcarbamoyladenylate + adenosine(37) in tRNA = N(6)-L-threonylcarbamoyladenosine(37) in tRNA + AMP + H(+). Its function is as follows. Required for the formation of a threonylcarbamoyl group on adenosine at position 37 (t(6)A37) in tRNAs that read codons beginning with adenine. Is involved in the transfer of the threonylcarbamoyl moiety of threonylcarbamoyl-AMP (TC-AMP) to the N6 group of A37, together with TsaE and TsaB. TsaD likely plays a direct catalytic role in this reaction. The polypeptide is tRNA N6-adenosine threonylcarbamoyltransferase (Microcystis aeruginosa (strain NIES-843 / IAM M-2473)).